The following is a 253-amino-acid chain: 5-oxoprolinase subunit A (253 aa).

This sequence belongs to the LamB/PxpA family. In terms of assembly, forms a complex composed of PxpA, PxpB and PxpC.

The catalysed reaction is 5-oxo-L-proline + ATP + 2 H2O = L-glutamate + ADP + phosphate + H(+). Catalyzes the cleavage of 5-oxoproline to form L-glutamate coupled to the hydrolysis of ATP to ADP and inorganic phosphate. This Bacillus cereus (strain ATCC 14579 / DSM 31 / CCUG 7414 / JCM 2152 / NBRC 15305 / NCIMB 9373 / NCTC 2599 / NRRL B-3711) protein is 5-oxoprolinase subunit A.